The chain runs to 175 residues: Nascent polypeptide-associated complex subunit beta (175 aa).

2 disordered regions span residues 1-36 and 129-175; these read MDKEKLAKLQSQVRIGGKGTPRRKVVKKSVTSSQGD and RQAA…EELE. The NAC-A/B domain maps to 34–101; sequence QGDDRKLQAA…GQTKELTELV (68 aa). Residues 149–163 are compositionally biased toward acidic residues; that stretch reads EGDDEIPDLVDNFDE. Residues 164-175 show a composition bias toward basic and acidic residues; that stretch reads AEVKKSDLEELE.

Belongs to the NAC-beta family. Part of the nascent polypeptide-associated complex (NAC), consisting of EGD2 and EGD1. NAC associates with ribosomes via EGD1.

It is found in the cytoplasm. It localises to the nucleus. Component of the nascent polypeptide-associated complex (NAC), a dynamic component of the ribosomal exit tunnel, protecting the emerging polypeptides from interaction with other cytoplasmic proteins to ensure appropriate nascent protein targeting. The NAC complex also promotes mitochondrial protein import by enhancing productive ribosome interactions with the outer mitochondrial membrane and blocks the inappropriate interaction of ribosomes translating non-secretory nascent polypeptides with translocation sites in the membrane of the endoplasmic reticulum. EGD1 may act as a transcription factor that exert a negative effect on the expression of several genes that are transcribed by RNA polymerase II. The polypeptide is Nascent polypeptide-associated complex subunit beta (EGD1) (Cryptococcus neoformans var. neoformans serotype D (strain B-3501A) (Filobasidiella neoformans)).